We begin with the raw amino-acid sequence, 541 residues long: Probable malate:quinone oxidoreductase (541 aa).

The interval 520-541 (AKPAAGAAQQAKPAKATADIAL) is disordered.

The protein belongs to the MQO family. It depends on FAD as a cofactor.

The catalysed reaction is (S)-malate + a quinone = a quinol + oxaloacetate. It participates in carbohydrate metabolism; tricarboxylic acid cycle; oxaloacetate from (S)-malate (quinone route): step 1/1. The polypeptide is Probable malate:quinone oxidoreductase (Ralstonia nicotianae (strain ATCC BAA-1114 / GMI1000) (Ralstonia solanacearum)).